The following is a 295-amino-acid chain: AP-1-like transcription factor YAP4 (295 aa).

Phosphoserine occurs at positions 85, 89, and 196. A compositionally biased stretch (polar residues) spans 181–202; sequence ASYFPSNSTPATRKNSATTNLP. Residues 181 to 205 form a disordered region; the sequence is ASYFPSNSTPATRKNSATTNLPSEE. Residues 237 to 295 form the bZIP domain; that stretch reads PLRNTKRAAQNRSAQKAFRQRREKYIKNLEEKSKLFDGLMKENSELKKMIESLKSKLKE. Residues 239 to 260 are basic motif; it reads RNTKRAAQNRSAQKAFRQRREK. The leucine-zipper stretch occupies residues 262–271; it reads IKNLEEKSKL.

Belongs to the bZIP family. YAP subfamily. In terms of assembly, homodimer.

The protein resides in the cytoplasm. The protein localises to the nucleus. In terms of biological role, transcription activator involved in the regulation of genes expressed in response to environmental changes and metabolic requirements. According to genome-wide promoter binding and gene expression studies it regulates, among others, genes involved in ribosome biogenesis, and protein synthesis. It may also be involved in pleiotropic drug resistance. When overexpressed it confers increased resistance to cisplatin, the DNA-alkylating agents methylmethanosulfonate, and mitomycin C, the antimalarial drugs quinidine, mefloquine, and chloroquine, and increases cellular tolerance to sodium and lithium. Preferentially binds 5'-TTACTAA-3'. The sequence is that of AP-1-like transcription factor YAP4 (CIN5) from Saccharomyces cerevisiae (strain ATCC 204508 / S288c) (Baker's yeast).